The chain runs to 505 residues: MSCDTQEATRECLGMNLDGNKEPVSLVESGVRSESEHLQVTIGATVPTGFEQTAAGEVREKLKSACRISKDRGKIYFDIAVESLAQVHCLRSVDNLFVVVQEFKDYQFKDTKEEVLRDFEELAGKLPWSDPLKVWQINTTFKKKKAKRRKANQSAGKEKADCGQGDKADEKDGKKKHASSTSDSHILDYYENPAIKEEISTLVGDVLSSCKDETGQSLREETEPQVQKFRVTCNRAGEKHCFTSNEAARDFGGAIQEYFKWKADMTNFDVEVLLNIHDNEVIVAIALTEESLHRRNITHFGPTTLRSTLAYGMLRLCEPKPTDVIVDPMCGTGAIPIEGATEWSHCYHIAGDNNPLAVNRAANNISSLLTKSQIKDGKTTWGLPIDAVQWDICNLPLRTASVDIIVTDMPFGKRMGSKKRNWNLYPACLREMSRVCRPGTGRAVLLTQDKKCFTKALSGMGHVWRKVHVVWVNIGGLHAAVYLLKRTAQAFVHPSDQDEGRDPPW.

The tract at residues 145–182 (KAKRRKANQSAGKEKADCGQGDKADEKDGKKKHASSTS) is disordered. Positions 156–173 (GKEKADCGQGDKADEKDG) are enriched in basic and acidic residues. The region spanning 171–287 (KDGKKKHASS…DNEVIVAIAL (117 aa)) is the THUMP domain.

Belongs to the methyltransferase superfamily. In terms of assembly, part of the heterodimeric THUMPD3-TRM112 methyltransferase complex; this complex forms an active tRNA methyltransferase, where TRMT112 acts as an activator of the catalytic subunit THUMPD3. As to expression, ubiquitously expressed. Abundantly expressed in the testis, also expressed in the brain, heart, kidney, liver, lung, muscle and spleen.

The protein resides in the cytoplasm. It carries out the reaction guanosine(6) in tRNA + S-adenosyl-L-methionine = N(2)-methylguanosine(6) in tRNA + S-adenosyl-L-homocysteine + H(+). The enzyme catalyses guanosine(7) in tRNA + S-adenosyl-L-methionine = N(2)-methylguanosine(7) in tRNA + S-adenosyl-L-homocysteine + H(+). Its function is as follows. Catalytic subunit of the THUMPD3-TRM112 methyltransferase complex, that specifically mediates the S-adenosyl-L-methionine-dependent N(2)-methylation of guanosine nucleotide at position 6 (m2G6) in tRNAs. This is one of the major tRNA (guanine-N(2))-methyltransferases. Also catalyzes the S-adenosyl-L-methionine-dependent N(2)-methylation of guanosine nucleotide at position 7 of tRNA(Trp). The polypeptide is tRNA (guanine(6)-N(2))-methyltransferase THUMP3 (Mus musculus (Mouse)).